We begin with the raw amino-acid sequence, 293 residues long: Bifunctional protein FolD 1 (293 aa).

NADP(+) contacts are provided by residues 174–176 (GRS) and Thr-240.

This sequence belongs to the tetrahydrofolate dehydrogenase/cyclohydrolase family. In terms of assembly, homodimer.

The enzyme catalyses (6R)-5,10-methylene-5,6,7,8-tetrahydrofolate + NADP(+) = (6R)-5,10-methenyltetrahydrofolate + NADPH. It carries out the reaction (6R)-5,10-methenyltetrahydrofolate + H2O = (6R)-10-formyltetrahydrofolate + H(+). It participates in one-carbon metabolism; tetrahydrofolate interconversion. Functionally, catalyzes the oxidation of 5,10-methylenetetrahydrofolate to 5,10-methenyltetrahydrofolate and then the hydrolysis of 5,10-methenyltetrahydrofolate to 10-formyltetrahydrofolate. The polypeptide is Bifunctional protein FolD 1 (Saccharopolyspora erythraea (strain ATCC 11635 / DSM 40517 / JCM 4748 / NBRC 13426 / NCIMB 8594 / NRRL 2338)).